Here is a 137-residue protein sequence, read N- to C-terminus: Large ribosomal subunit protein bL12 (137 aa).

The protein belongs to the bacterial ribosomal protein bL12 family. Homodimer. Part of the ribosomal stalk of the 50S ribosomal subunit. Forms a multimeric L10(L12)X complex, where L10 forms an elongated spine to which 2 to 4 L12 dimers bind in a sequential fashion. Binds GTP-bound translation factors.

Its function is as follows. Forms part of the ribosomal stalk which helps the ribosome interact with GTP-bound translation factors. Is thus essential for accurate translation. This is Large ribosomal subunit protein bL12 from Synechococcus sp. (strain JA-3-3Ab) (Cyanobacteria bacterium Yellowstone A-Prime).